Here is a 436-residue protein sequence, read N- to C-terminus: MYHPRELYPSLGAGYRLGPAQPGADSSFPPALAEGYRYPELDTPKLDCFLSGMEAAPRTLAAHPPLPLLPPAMGTEPAPSAPEALHSLPGVSLSLENRELWKEFSSVGTEMIITKAGRRMFPACRVSVTGLDPEARYLFLLDVIPVDGARYRWQGRCWEPSGKAEPRLPDRVYIHPDSPATGAHWMRQPVSFHRVKLTNSTLDPHGHLILHSMHKYQPRIHLVRAAQLCSQHWGGMASFRFPETTFISVTAYQNPRITQLKIAANPFAKGFRENGRNCKRERDARVKRKLRGPEPAATEACGSGDTPGGPCDSTLGGDIRESDPEQAPAPGEATAAPAPLCGGPSAEAYLLHPAAFHGAPSHLPTRSPSFPEAPDSGRSAPYSAAFLELPHGSGGSGYPAAPPAVPFAPHFLQGGPFPLPYTAPGGYLDVGSKPMY.

The T-box DNA-binding region spans Leu100–Glu273. Basic and acidic residues predominate over residues Asn274–Ala284. 2 disordered regions span residues Asn274–Pro339 and Pro360–Ser379. The segment covering Glu325–Pro339 has biased composition (low complexity).

Forms a dimeric complex with DNA (in vitro).

It localises to the nucleus. In terms of biological role, T-box transcription factor that plays an essential role in the determination of the fate of axial stem cells: neural vs mesodermal. Acts in part by down-regulating, a specific enhancer (N1) of SOX2, to inhibit neural development. Seems to play also an essential role in left/right axis determination and acts through effects on Notch signaling around the node as well as through an effect on the morphology and motility of the nodal cilia. The chain is T-box transcription factor TBX6 (TBX6) from Gorilla gorilla gorilla (Western lowland gorilla).